Reading from the N-terminus, the 303-residue chain is Kanosamine kinase (303 aa).

The protein belongs to the ROK (NagC/XylR) family.

The catalysed reaction is kanosamine + ATP = D-kanosamine 6-phosphate + ADP + H(+). It participates in antibiotic biosynthesis; rifamycin B biosynthesis. Its activity is regulated as follows. Inhibited by Zn(2+), Cu(2+), and Fe(2+). Its function is as follows. Involved in the biosynthesis of 3-amino-5-hydroxybenzoate (AHBA), a compound that then serves as the starter unit for the assembly of a polyketide during the biosynthesis of rifamycin B and other ansamycin antibiotics. Catalyzes only the phosphorylation of kanosamine to yield kanosamine 6-phosphate. The chain is Kanosamine kinase (rifN) from Amycolatopsis mediterranei (strain S699) (Nocardia mediterranei).